We begin with the raw amino-acid sequence, 266 residues long: Putative carbamate hydrolase RutD (266 aa).

Belongs to the AB hydrolase superfamily. Hydrolase RutD family.

The catalysed reaction is carbamate + 2 H(+) = NH4(+) + CO2. Functionally, involved in pyrimidine catabolism. May facilitate the hydrolysis of carbamate, a reaction that can also occur spontaneously. This Enterobacter cloacae subsp. cloacae (strain ATCC 13047 / DSM 30054 / NBRC 13535 / NCTC 10005 / WDCM 00083 / NCDC 279-56) protein is Putative carbamate hydrolase RutD.